The following is an 80-amino-acid chain: D-alanyl carrier protein 2 (80 aa).

Residues 1 to 80 enclose the Carrier domain; the sequence is MIMDDVKATV…KIVAKVASLQ (80 aa). Serine 38 is subject to O-(pantetheine 4'-phosphoryl)serine.

The protein belongs to the DltC family. 4'-phosphopantetheine is transferred from CoA to a specific serine of apo-DCP.

The protein localises to the cytoplasm. It participates in cell wall biogenesis; lipoteichoic acid biosynthesis. In terms of biological role, carrier protein involved in the D-alanylation of lipoteichoic acid (LTA). The loading of thioester-linked D-alanine onto DltC is catalyzed by D-alanine--D-alanyl carrier protein ligase DltA. The DltC-carried D-alanyl group is further transferred to cell membrane phosphatidylglycerol (PG) by forming an ester bond, probably catalyzed by DltD. D-alanylation of LTA plays an important role in modulating the properties of the cell wall in Gram-positive bacteria, influencing the net charge of the cell wall. The protein is D-alanyl carrier protein 2 of Lactiplantibacillus plantarum (strain ATCC BAA-793 / NCIMB 8826 / WCFS1) (Lactobacillus plantarum).